Consider the following 150-residue polypeptide: MNVILLDKIANLGNLGDQVAVKAGYARNFLLPQGKAVVANTANTEVFEARRAELEAKLVADLTAANERAEKINALESIVIASKAGDEGKLFGSIGNRDIADAVTAAGVELAKSEVRLPLGALRTTGEFEVEVQVHTEVKAIVKLSVVAED.

The protein belongs to the bacterial ribosomal protein bL9 family.

Its function is as follows. Binds to the 23S rRNA. The polypeptide is Large ribosomal subunit protein bL9 (Shewanella sediminis (strain HAW-EB3)).